Consider the following 359-residue polypeptide: 3-dehydroquinate synthase (359 aa).

NAD(+)-binding positions include 71–76, 105–109, 129–130, Lys-142, Lys-151, and 169–172; these read DGEQYK, GVIGD, TT, and CLST. Residues Glu-184, His-247, and His-264 each contribute to the Zn(2+) site.

The protein belongs to the sugar phosphate cyclases superfamily. Dehydroquinate synthase family. It depends on Co(2+) as a cofactor. Zn(2+) is required as a cofactor. Requires NAD(+) as cofactor.

The protein localises to the cytoplasm. It catalyses the reaction 7-phospho-2-dehydro-3-deoxy-D-arabino-heptonate = 3-dehydroquinate + phosphate. The protein operates within metabolic intermediate biosynthesis; chorismate biosynthesis; chorismate from D-erythrose 4-phosphate and phosphoenolpyruvate: step 2/7. Catalyzes the conversion of 3-deoxy-D-arabino-heptulosonate 7-phosphate (DAHP) to dehydroquinate (DHQ). This is 3-dehydroquinate synthase from Shewanella piezotolerans (strain WP3 / JCM 13877).